We begin with the raw amino-acid sequence, 363 residues long: Serpentine receptor class T-55 (363 aa).

Residues 1 to 18 (MKLRHFLIFLMLIPISSS) form the signal peptide. Helical transmembrane passes span 70-90 (IYYI…IWVF), 107-127 (VFIG…PGFV), 143-163 (IVGK…AFLG), 187-207 (WLTV…TVLF), 231-251 (FLYF…ACLC), 278-298 (ICIS…FVLP), and 303-323 (FFHV…IMYI).

This sequence belongs to the nematode receptor-like protein srt family.

The protein localises to the membrane. The polypeptide is Serpentine receptor class T-55 (srt-55) (Caenorhabditis elegans).